Here is a 592-residue protein sequence, read N- to C-terminus: Protein kinase C zeta type (592 aa).

A PB1 domain is found at 15 to 98 (RVRLKAHYGG…EGLIIHVFPS (84 aa)). Residues 79–145 (AFRLARQCRD…KRFNRRAYCG (67 aa)) are interaction with SQSTM1. A Phorbol-ester/DAG-type zinc finger spans residues 130–180 (GHLFQAKRFNRRAYCGQCSERIWGLARQGYRCINCKLLVHKRCHGLVPLTC). A Protein kinase domain is found at 252 to 518 (FDLIRVIGRG…FSDIKSHAFF (267 aa)). Residues 258–266 (IGRGSYAKV) and Lys-281 each bind ATP. Catalysis depends on Asp-376, which acts as the Proton acceptor. Thr-410 carries the phosphothreonine; by PDPK1 and PI3K modification. One can recognise an AGC-kinase C-terminal domain in the interval 519–590 (RSIDWDLLEK…INPLLLSTEE (72 aa)). Thr-560 is subject to Phosphothreonine. At Ser-591 the chain carries Phosphoserine.

This sequence belongs to the protein kinase superfamily. AGC Ser/Thr protein kinase family. PKC subfamily. Forms a ternary complex with SQSTM1 and KCNAB2. Forms another ternary complex with SQSTM1 and GABRR3. Forms a complex with SQSTM1 and MAP2K5. Interacts with PARD6A, PARD6B, PARD6G and SQSTM1. Part of a complex with PARD3, PARD6A or PARD6B or PARD6G and CDC42 or RAC1. Interacts with ADAP1/CENTA1. Forms a ternary complex composed of SQSTM1 and PAWR. Interacts directly with SQSTM1. Interacts with IKBKB. Interacts (via the protein kinase domain) with WWC1. Forms a tripartite complex with WWC1 and DDR1, but predominantly in the absence of collagen. Component of the Par polarity complex, composed of at least phosphorylated PRKCZ, PARD3 and TIAM1. Interacts with PDPK1 (via N-terminal region). Interacts with WDFY2 (via WD repeats 1-3). Interacts with VAMP2. Forms a complex with WDFY2 and VAMP2. Interacts with APPL1. Interacts with WWC1, WWC2 and WWC3. Post-translationally, CDH5 is required for its phosphorylation at Thr-410. Phosphorylated by protein kinase PDPK1; phosphorylation is inhibited by the apoptotic C-terminal cleavage product of PKN2. Phosphorylation at Thr-410 by PI3K activates the kinase. Expressed in brain, and to a lesser extent in lung, kidney and testis.

It is found in the cytoplasm. The protein resides in the endosome. It localises to the cell junction. The protein localises to the membrane. The catalysed reaction is L-seryl-[protein] + ATP = O-phospho-L-seryl-[protein] + ADP + H(+). The enzyme catalyses L-threonyl-[protein] + ATP = O-phospho-L-threonyl-[protein] + ADP + H(+). With respect to regulation, atypical PKCs (PRKCI and PRKCZ) exhibit an elevated basal enzymatic activity (that may be due to the interaction with SMG1 or SQSTM1) and are not regulated by diacylglycerol, phosphatidylserine, phorbol esters or calcium ions. Two specific sites, Thr-410 (activation loop of the kinase domain) and Thr-560 (turn motif), need to be phosphorylated for its full activation. Phosphatidylinositol 3,4,5-trisphosphate might be a physiological activator. Isoform 2: Constitutively active. In terms of biological role, calcium- and diacylglycerol-independent serine/threonine-protein kinase that functions in phosphatidylinositol 3-kinase (PI3K) pathway and mitogen-activated protein (MAP) kinase cascade, and is involved in NF-kappa-B activation, mitogenic signaling, cell proliferation, cell polarity, inflammatory response and maintenance of long-term potentiation (LTP). Upon lipopolysaccharide (LPS) treatment in macrophages, or following mitogenic stimuli, functions downstream of PI3K to activate MAP2K1/MEK1-MAPK1/ERK2 signaling cascade independently of RAF1 activation. Required for insulin-dependent activation of AKT3, but may function as an adapter rather than a direct activator. Upon insulin treatment may act as a downstream effector of PI3K and contribute to the activation of translocation of the glucose transporter SLC2A4/GLUT4 and subsequent glucose transport in adipocytes. In EGF-induced cells, binds and activates MAP2K5/MEK5-MAPK7/ERK5 independently of its kinase activity and can activate JUN promoter through MEF2C. Through binding with SQSTM1/p62, functions in interleukin-1 signaling and activation of NF-kappa-B with the specific adapters RIPK1 and TRAF6. Participates in TNF-dependent transactivation of NF-kappa-B by phosphorylating and activating IKBKB kinase, which in turn leads to the degradation of NF-kappa-B inhibitors. In migrating astrocytes, forms a cytoplasmic complex with PARD6A and is recruited by CDC42 to function in the establishment of cell polarity along with the microtubule motor and dynein. In association with FEZ1, stimulates neuronal differentiation in PC12 cells. In the inflammatory response, is required for the T-helper 2 (Th2) differentiation process, including interleukin production, efficient activation of JAK1 and the subsequent phosphorylation and nuclear translocation of STAT6. May be involved in development of allergic airway inflammation (asthma), a process dependent on Th2 immune response. In the NF-kappa-B-mediated inflammatory response, can relieve SETD6-dependent repression of NF-kappa-B target genes by phosphorylating the RELA subunit at 'Ser-311'. Phosphorylates VAMP2 in vitro. Phosphorylates and activates LRRK1, which phosphorylates RAB proteins involved in intracellular trafficking. Its function is as follows. Involved in late synaptic long term potention phase in CA1 hippocampal cells and long term memory maintenance. The chain is Protein kinase C zeta type (PRKCZ) from Homo sapiens (Human).